Here is a 300-residue protein sequence, read N- to C-terminus: Transcription initiation factor IIB (300 aa).

The TFIIB-type zinc-finger motif lies at 2-34 (NKQKVCPACESAELIYDPERGEIVCAKCGYVIE). Zn(2+) contacts are provided by Cys-7, Cys-10, Cys-26, and Cys-29. Repeat copies occupy residues 114–197 (SELD…ARNL) and 210–291 (DYVN…ELVE).

This sequence belongs to the TFIIB family.

Functionally, stabilizes TBP binding to an archaeal box-A promoter. Also responsible for recruiting RNA polymerase II to the pre-initiation complex (DNA-TBP-TFIIB). The polypeptide is Transcription initiation factor IIB (Pyrococcus furiosus (strain ATCC 43587 / DSM 3638 / JCM 8422 / Vc1)).